The sequence spans 161 residues: Nucleotide-binding protein Bmul_0741/BMULJ_02519 (161 aa).

This sequence belongs to the YajQ family.

In terms of biological role, nucleotide-binding protein. This chain is Nucleotide-binding protein Bmul_0741/BMULJ_02519, found in Burkholderia multivorans (strain ATCC 17616 / 249).